We begin with the raw amino-acid sequence, 428 residues long: Adenosylhomocysteinase (428 aa).

The substrate site is built by threonine 62, aspartate 134, and glutamate 159. An NAD(+)-binding site is contributed by 160–162 (TTT). Lysine 189 and aspartate 193 together coordinate substrate. NAD(+) is bound by residues asparagine 194, 223-228 (GYGWCG), glutamate 246, asparagine 281, 302-304 (SGH), and asparagine 349.

Belongs to the adenosylhomocysteinase family. It depends on NAD(+) as a cofactor.

The protein localises to the cytoplasm. It catalyses the reaction S-adenosyl-L-homocysteine + H2O = L-homocysteine + adenosine. Its pathway is amino-acid biosynthesis; L-homocysteine biosynthesis; L-homocysteine from S-adenosyl-L-homocysteine: step 1/1. Its function is as follows. May play a key role in the regulation of the intracellular concentration of adenosylhomocysteine. The chain is Adenosylhomocysteinase from Gloeobacter violaceus (strain ATCC 29082 / PCC 7421).